The chain runs to 238 residues: Purine nucleoside phosphorylase DeoD-type (238 aa).

Histidine 5 lines the a purine D-ribonucleoside pocket. Residues glycine 21, arginine 25, arginine 44, and arginine 88–serine 91 contribute to the phosphate site. A purine D-ribonucleoside is bound by residues glutamate 180–glutamate 182 and serine 204–aspartate 205. Catalysis depends on aspartate 205, which acts as the Proton donor.

The protein belongs to the PNP/UDP phosphorylase family. In terms of assembly, homohexamer; trimer of homodimers.

It catalyses the reaction a purine D-ribonucleoside + phosphate = a purine nucleobase + alpha-D-ribose 1-phosphate. The enzyme catalyses a purine 2'-deoxy-D-ribonucleoside + phosphate = a purine nucleobase + 2-deoxy-alpha-D-ribose 1-phosphate. Catalyzes the reversible phosphorolytic breakdown of the N-glycosidic bond in the beta-(deoxy)ribonucleoside molecules, with the formation of the corresponding free purine bases and pentose-1-phosphate. The protein is Purine nucleoside phosphorylase DeoD-type of Proteus mirabilis (strain HI4320).